The sequence spans 265 residues: DNA repair protein RecO (265 aa).

Belongs to the RecO family.

In terms of biological role, involved in DNA repair and RecF pathway recombination. This chain is DNA repair protein RecO, found in Mycolicibacterium paratuberculosis (strain ATCC BAA-968 / K-10) (Mycobacterium paratuberculosis).